We begin with the raw amino-acid sequence, 1400 residues long: DNA-directed RNA polymerase subunit beta' (1400 aa).

Zn(2+) contacts are provided by Cys71, Cys73, Cys86, and Cys89. Mg(2+) contacts are provided by Asp462, Asp464, and Asp466. 4 residues coordinate Zn(2+): Cys810, Cys884, Cys891, and Cys894. Residues 1377 to 1400 (REKQATIVPPAAPEAEPLALPPVE) are disordered.

It belongs to the RNA polymerase beta' chain family. The RNAP catalytic core consists of 2 alpha, 1 beta, 1 beta' and 1 omega subunit. When a sigma factor is associated with the core the holoenzyme is formed, which can initiate transcription. The cofactor is Mg(2+). Zn(2+) serves as cofactor.

The enzyme catalyses RNA(n) + a ribonucleoside 5'-triphosphate = RNA(n+1) + diphosphate. In terms of biological role, DNA-dependent RNA polymerase catalyzes the transcription of DNA into RNA using the four ribonucleoside triphosphates as substrates. The polypeptide is DNA-directed RNA polymerase subunit beta' (Rhodopseudomonas palustris (strain HaA2)).